We begin with the raw amino-acid sequence, 283 residues long: MRTQWPSPAKLNLFLYITGQRADGYHTLQTLFQFLDYGDTISIELRDDGDIRLLTPVEGVEHEDNLIVRAARLLMKTAADSGRLSTGSGANISIDKRLPMGGGLGGGSSNAATVLVALNHLWQCGLSMDELAEMGLTLGADVPVFVRGHAAFAEGVGEIFTPVDPPEKWYLVAHPGVSIPTPVIFKDPELPRNTPKRSIETLLKCEFSNDCEVIARKRFREVDVVLSWLLEYAPSRLTGTGACVFAEFDTESEARQVLEQAPEWLNGFVARGVNLSPLHRAML.

Lys10 is a catalytic residue. Pro99–Ser109 contacts ATP. Residue Asp141 is part of the active site.

Belongs to the GHMP kinase family. IspE subfamily. As to quaternary structure, homodimer.

It catalyses the reaction 4-CDP-2-C-methyl-D-erythritol + ATP = 4-CDP-2-C-methyl-D-erythritol 2-phosphate + ADP + H(+). It participates in isoprenoid biosynthesis; isopentenyl diphosphate biosynthesis via DXP pathway; isopentenyl diphosphate from 1-deoxy-D-xylulose 5-phosphate: step 3/6. Its function is as follows. Catalyzes the phosphorylation of the position 2 hydroxy group of 4-diphosphocytidyl-2C-methyl-D-erythritol. This is 4-diphosphocytidyl-2-C-methyl-D-erythritol kinase from Escherichia coli O127:H6 (strain E2348/69 / EPEC).